We begin with the raw amino-acid sequence, 150 residues long: Transcriptional regulator MraZ (150 aa).

SpoVT-AbrB domains are found at residues 7–55 (SHAI…PEPE) and 84–127 (AALM…SEES).

It belongs to the MraZ family. As to quaternary structure, forms oligomers.

The protein localises to the cytoplasm. It localises to the nucleoid. The chain is Transcriptional regulator MraZ from Marinobacter nauticus (strain ATCC 700491 / DSM 11845 / VT8) (Marinobacter aquaeolei).